The following is a 611-amino-acid chain: Dihydroxy-acid dehydratase (611 aa).

A Mg(2+)-binding site is contributed by D81. C122 serves as a coordination point for [2Fe-2S] cluster. Mg(2+)-binding residues include D123 and K124. At K124 the chain carries N6-carboxylysine. C195 lines the [2Fe-2S] cluster pocket. E491 provides a ligand contact to Mg(2+). S517 acts as the Proton acceptor in catalysis.

This sequence belongs to the IlvD/Edd family. Homodimer. The cofactor is [2Fe-2S] cluster. Requires Mg(2+) as cofactor.

The enzyme catalyses (2R)-2,3-dihydroxy-3-methylbutanoate = 3-methyl-2-oxobutanoate + H2O. It catalyses the reaction (2R,3R)-2,3-dihydroxy-3-methylpentanoate = (S)-3-methyl-2-oxopentanoate + H2O. Its pathway is amino-acid biosynthesis; L-isoleucine biosynthesis; L-isoleucine from 2-oxobutanoate: step 3/4. It functions in the pathway amino-acid biosynthesis; L-valine biosynthesis; L-valine from pyruvate: step 3/4. Its function is as follows. Functions in the biosynthesis of branched-chain amino acids. Catalyzes the dehydration of (2R,3R)-2,3-dihydroxy-3-methylpentanoate (2,3-dihydroxy-3-methylvalerate) into 2-oxo-3-methylpentanoate (2-oxo-3-methylvalerate) and of (2R)-2,3-dihydroxy-3-methylbutanoate (2,3-dihydroxyisovalerate) into 2-oxo-3-methylbutanoate (2-oxoisovalerate), the penultimate precursor to L-isoleucine and L-valine, respectively. This is Dihydroxy-acid dehydratase from Brucella anthropi (strain ATCC 49188 / DSM 6882 / CCUG 24695 / JCM 21032 / LMG 3331 / NBRC 15819 / NCTC 12168 / Alc 37) (Ochrobactrum anthropi).